The following is a 926-amino-acid chain: Lipoxygenase 4, chloroplastic (926 aa).

The transit peptide at 1-58 (MALANEIMGSRLIFERSSSLASPFHSRFSIKKKTQRTQFSINPFDPRPMRAVNSSGVV) directs the protein to the chloroplast. The region spanning 106 to 228 (FKETLVKHLD…DHPSKRILFT (123 aa)) is the PLAT domain. Residues 231–926 (PYLPSETPSG…CRGVPNSVSI (696 aa)) form the Lipoxygenase domain. Fe cation-binding residues include histidine 585, histidine 590, histidine 777, asparagine 781, and isoleucine 926.

It belongs to the lipoxygenase family. The cofactor is Fe cation. As to expression, expressed in leaves.

It is found in the plastid. Its subcellular location is the chloroplast. It carries out the reaction (9Z,12Z)-octadecadienoate + O2 = (13S)-hydroperoxy-(9Z,11E)-octadecadienoate. It catalyses the reaction (9Z,12Z,15Z)-octadecatrienoate + O2 = (13S)-hydroperoxy-(9Z,11E,15Z)-octadecatrienoate. It functions in the pathway lipid metabolism; oxylipin biosynthesis. Functionally, plant lipoxygenases may be involved in a number of diverse aspects of plant physiology including growth and development, pest resistance, and senescence or responses to wounding. Catalyzes the hydroperoxidation of lipids containing a cis,cis-1,4-pentadiene structure. 13S-lipoxygenase that can use linolenic acid as substrates. The protein is Lipoxygenase 4, chloroplastic (LOX4) of Arabidopsis thaliana (Mouse-ear cress).